The chain runs to 785 residues: Endonuclease MutS2 (785 aa).

332-339 is an ATP binding site; sequence GPNTGGKT. In terms of domain architecture, Smr spans 710 to 785; that stretch reads IDLRGLDAEE…GDGATIVELK (76 aa).

The protein belongs to the DNA mismatch repair MutS family. MutS2 subfamily. As to quaternary structure, homodimer. Binds to stalled ribosomes, contacting rRNA.

Endonuclease that is involved in the suppression of homologous recombination and thus may have a key role in the control of bacterial genetic diversity. Functionally, acts as a ribosome collision sensor, splitting the ribosome into its 2 subunits. Detects stalled/collided 70S ribosomes which it binds and splits by an ATP-hydrolysis driven conformational change. Acts upstream of the ribosome quality control system (RQC), a ribosome-associated complex that mediates the extraction of incompletely synthesized nascent chains from stalled ribosomes and their subsequent degradation. Probably generates substrates for RQC. The chain is Endonuclease MutS2 from Clostridium botulinum (strain Alaska E43 / Type E3).